A 457-amino-acid polypeptide reads, in one-letter code: Argininosuccinate lyase (457 aa).

The protein belongs to the lyase 1 family. Argininosuccinate lyase subfamily.

It localises to the cytoplasm. It carries out the reaction 2-(N(omega)-L-arginino)succinate = fumarate + L-arginine. Its pathway is amino-acid biosynthesis; L-arginine biosynthesis; L-arginine from L-ornithine and carbamoyl phosphate: step 3/3. This is Argininosuccinate lyase from Escherichia coli O157:H7.